A 221-amino-acid polypeptide reads, in one-letter code: MNNAEILKHVDHTLLKPVATWDDIKKICDESIEYNTASICIPACYISRIHETYGDKINICTVVGFPLGYSSTEGKIAETKQALADGANEIDMVINISDVKNKAYDKVTEEIRALKEVVGNKILKVIIETCYLTEEEKIAMCKAVTEAGADYIKTSTGFGTGGATLEDIKLFKKHIGPNVKIKAAGGVSTVEDLNMFINEGCDRLGTSRAVGLLKGEETQGY.

Residue Asp91 is the Proton donor/acceptor of the active site. The active-site Schiff-base intermediate with acetaldehyde is the Lys153. Lys182 (proton donor/acceptor) is an active-site residue.

The protein belongs to the DeoC/FbaB aldolase family. DeoC type 1 subfamily.

It is found in the cytoplasm. The enzyme catalyses 2-deoxy-D-ribose 5-phosphate = D-glyceraldehyde 3-phosphate + acetaldehyde. Its pathway is carbohydrate degradation; 2-deoxy-D-ribose 1-phosphate degradation; D-glyceraldehyde 3-phosphate and acetaldehyde from 2-deoxy-alpha-D-ribose 1-phosphate: step 2/2. Functionally, catalyzes a reversible aldol reaction between acetaldehyde and D-glyceraldehyde 3-phosphate to generate 2-deoxy-D-ribose 5-phosphate. The protein is Deoxyribose-phosphate aldolase of Clostridium botulinum (strain Alaska E43 / Type E3).